Here is a 220-residue protein sequence, read N- to C-terminus: Cytidylate kinase (220 aa).

10–18 (GPAGAGKST) contributes to the ATP binding site.

Belongs to the cytidylate kinase family. Type 1 subfamily.

It is found in the cytoplasm. The catalysed reaction is CMP + ATP = CDP + ADP. The enzyme catalyses dCMP + ATP = dCDP + ADP. This Alkaliphilus metalliredigens (strain QYMF) protein is Cytidylate kinase.